The following is a 1918-amino-acid chain: NFX1-type zinc finger-containing protein 1 (1918 aa).

Positions 1 to 12 (MEERRPHLDARP) are enriched in basic and acidic residues. 2 disordered regions span residues 1–58 (MEER…RANN) and 75–140 (RNPH…QPQQ). Over residues 30–42 (RARNQANNPPANA) the composition is skewed to low complexity. A compositionally biased stretch (basic and acidic residues) spans 82-105 (RNQEGHASDEARDQRHDQENDTRW). A compositionally biased stretch (polar residues) spans 120–129 (SNDNFQQWRT). Residues 286 to 313 (DIEEETEKNLEKVQTIIEHLQEKRREGT) are a coiled coil. 2 disordered regions span residues 796-819 (SVSP…GEEE) and 876-896 (TAAG…QKKK). Residues 809–819 (EGDEEEEGEEE) are compositionally biased toward acidic residues. A compositionally biased stretch (polar residues) spans 877-887 (AAGQEQATGEW). A coiled-coil region spans residues 886-967 (EWQTQRNQKK…TSAERMAELR (82 aa)). 6 NF-X1-type zinc fingers span residues 1298–1320 (CGHV…QCMK), 1330–1346 (GHRC…PCQV), 1382–1400 (CGHR…LCSE), 1441–1463 (CGHP…RCQQ), 1471–1488 (CSHK…PCQR), and 1546–1564 (CGHP…KCRI). Positions 1741–1820 (LAKKRLSFTS…EKMEALKATL (80 aa)) form a coiled coil. Residues 1827–1898 (ISEEERVQIV…LASEMDGAQH (72 aa)) form an RZ-type zinc finger. Positions 1849, 1853, 1869, and 1872 each coordinate Zn(2+).

Belongs to the ZNFX1 family. In terms of assembly, interacts with MAVS. In terms of tissue distribution, widely expressed.

Its subcellular location is the mitochondrion outer membrane. It is found in the cytoplasm. The protein localises to the stress granule. Its function is as follows. RNA-binding protein that initiates the antiviral response and is required to restrict the replication of RNA viruses. Acts as a double-stranded RNA (dsRNA) sensor that recognizes viral RNA and then interacts with MAVS to initiate the type I interferon response. Also required for immunity against some bacteria, such as mycobacteria. This chain is NFX1-type zinc finger-containing protein 1, found in Homo sapiens (Human).